The following is a 344-amino-acid chain: Adenosine kinase (344 aa).

D298 is a catalytic residue.

Belongs to the carbohydrate kinase PfkB family. Mg(2+) serves as cofactor.

It catalyses the reaction adenosine + ATP = AMP + ADP + H(+). Its pathway is purine metabolism; AMP biosynthesis via salvage pathway; AMP from adenosine: step 1/1. This is Adenosine kinase (ADK) from Schizophyllum commune (Split gill fungus).